The sequence spans 734 residues: ABC transporter D family member 1 (734 aa).

The next 4 membrane-spanning stretches (helical) occupy residues Ile-52 to Gly-72, Phe-112 to Ala-132, Phe-177 to Tyr-197, and Thr-204 to Ile-224. The region spanning Pro-63 to Phe-351 is the ABC transmembrane type-1 domain. Basic and acidic residues predominate over residues His-271–Glu-286. The segment at His-271–Glu-296 is disordered. Residues Asp-332 to Lys-359 adopt a coiled-coil conformation. A helical transmembrane segment spans residues Leu-374–Leu-394. In terms of domain architecture, ABC transporter spans Ile-492–Glu-729. ATP is bound at residue Gly-525–Ser-532. Positions Gln-712–Asn-725 are enriched in low complexity. The disordered stretch occupies residues Gln-712 to Asp-734.

This sequence belongs to the ABC transporter superfamily. ABCD family. Peroxisomal fatty acyl CoA transporter (TC 3.A.1.203) subfamily.

The protein localises to the membrane. The catalysed reaction is (9Z)-octadecenoyl-CoA(in) = (9Z)-octadecenoyl-CoA(out). This is ABC transporter D family member 1 (abcD1) from Dictyostelium discoideum (Social amoeba).